Consider the following 39-residue polypeptide: Mu-theraphotoxin-Ae1a (39 aa).

3 disulfide bridges follow: cysteine 7–cysteine 21, cysteine 14–cysteine 26, and cysteine 20–cysteine 33. Position 39 is a phenylalanine amide (phenylalanine 39).

Belongs to the neurotoxin 10 (Hwtx-1) family. 47 subfamily. Expressed by the venom gland.

The protein resides in the secreted. Functionally, insecticidal toxin that acts, at least partially, by inhibiting insect voltage-gated sodium (NaV) channels of several insect species. The toxin binds to the voltage sensor in NaV channel domain II and inhibits channel opening by shifting the threshold for channel activation to more positive voltages. The toxin binding is sensitive to residues in the S1-S2 loop of the domain II voltage sensor. In vivo, the recombinant toxin causes paralysis and/or death to two dipteran species (Lucilia cuprina and Drosophila melanogaster). In contrast, the toxin does not show paralytic or lethal effect on the cotton bollworm Helicoverpa armigera and the triatomine bug Rhodinius prolixus. This Augacephalus ezendami (Mozambique baboon spider) protein is Mu-theraphotoxin-Ae1a.